Reading from the N-terminus, the 357-residue chain is Peptide chain release factor 1 (357 aa).

Q234 bears the N5-methylglutamine mark. Over residues 284–307 (KKQEQRSNDRKQQVGSGDRSERIR) the composition is skewed to basic and acidic residues. The segment at 284–313 (KKQEQRSNDRKQQVGSGDRSERIRTYNFPQ) is disordered.

Belongs to the prokaryotic/mitochondrial release factor family. Post-translationally, methylated by PrmC. Methylation increases the termination efficiency of RF1.

The protein resides in the cytoplasm. In terms of biological role, peptide chain release factor 1 directs the termination of translation in response to the peptide chain termination codons UAG and UAA. This Borrelia hermsii (strain HS1 / DAH) protein is Peptide chain release factor 1.